The following is a 521-amino-acid chain: Medium/long-chain-fatty-acid--[acyl-carrier-protein] ligase MbtM (521 aa).

The protein belongs to the ATP-dependent AMP-binding enzyme family.

The catalysed reaction is a long-chain fatty acid + holo-[ACP] + ATP = a long-chain fatty acyl-[ACP] + AMP + diphosphate. The enzyme catalyses a medium-chain fatty acid + holo-[ACP] + ATP = a medium-chain fatty acyl-[ACP] + AMP + diphosphate. It functions in the pathway siderophore biosynthesis; mycobactin biosynthesis. In terms of biological role, activates lipidic moieties required for mycobactin biosynthesis. Converts medium- to long-chain aliphatic fatty acids into acyl adenylate, which is further transferred on to the phosphopantetheine arm of the carrier protein MbtL. This is Medium/long-chain-fatty-acid--[acyl-carrier-protein] ligase MbtM (mbtM) from Mycobacterium tuberculosis (strain CDC 1551 / Oshkosh).